The sequence spans 141 residues: Hemoglobin subunit alpha (141 aa).

The Globin domain maps to 1–141 (VLSSKDKANI…VSTVLTSKYR (141 aa)). The residue at position 3 (serine 3) is a Phosphoserine. 2 positions are modified to N6-succinyllysine: lysine 7 and lysine 11. Lysine 16 is subject to N6-acetyllysine; alternate. Lysine 16 is modified (N6-succinyllysine; alternate). Position 24 is a phosphotyrosine (tyrosine 24). Residue lysine 40 is modified to N6-succinyllysine. Serine 49 is subject to Phosphoserine. Histidine 58 lines the O2 pocket. Histidine 87 serves as a coordination point for heme b. Position 102 is a phosphoserine (serine 102). The residue at position 108 (threonine 108) is a Phosphothreonine. Serine 124 carries the phosphoserine modification. Residues threonine 134 and threonine 137 each carry the phosphothreonine modification. Position 138 is a phosphoserine (serine 138).

Belongs to the globin family. Heterotetramer of two alpha chains and two beta chains. As to expression, red blood cells.

Its function is as follows. Involved in oxygen transport from the lung to the various peripheral tissues. In terms of biological role, hemopressin acts as an antagonist peptide of the cannabinoid receptor CNR1. Hemopressin-binding efficiently blocks cannabinoid receptor CNR1 and subsequent signaling. The polypeptide is Hemoglobin subunit alpha (HBA) (Lama glama (Llama)).